We begin with the raw amino-acid sequence, 1201 residues long: Putative disease resistance protein At4g19050 (1201 aa).

33–40 is an ATP binding site; sequence GEAGIGKT. LRR repeat units follow at residues 469–491, 492–514, 517–539, 540–562, 680–701, 703–725, 726–748, 750–771, 773–795, 796–818, 820–841, 843–865, 866–888, and 890–911; these read KLRV…SGLQ, GLHV…FFKN, QLQS…EKLS, MLRC…IVET, ELRI…IADV, NLNK…EKLT, HLEV…FGEM, YLHE…ISEL, NLKE…EKLT, NLEI…FENL, CLHK…ISEL, HLVI…FESM, and YLCE…PKQS. Residues 1162-1180 are compositionally biased toward basic and acidic residues; that stretch reads DEPRIGARITDEISEDQPH. Residues 1162–1201 form a disordered region; that stretch reads DEPRIGARITDEISEDQPHKNTIGPETQTPTQPTKATDTV. The segment covering 1185–1201 has biased composition (polar residues); the sequence is GPETQTPTQPTKATDTV.

It belongs to the disease resistance NB-LRR family.

Functionally, potential disease resistance protein. The chain is Putative disease resistance protein At4g19050 from Arabidopsis thaliana (Mouse-ear cress).